The chain runs to 251 residues: 3-deoxy-manno-octulosonate cytidylyltransferase (251 aa).

The protein belongs to the KdsB family.

It is found in the cytoplasm. The enzyme catalyses 3-deoxy-alpha-D-manno-oct-2-ulosonate + CTP = CMP-3-deoxy-beta-D-manno-octulosonate + diphosphate. Its pathway is nucleotide-sugar biosynthesis; CMP-3-deoxy-D-manno-octulosonate biosynthesis; CMP-3-deoxy-D-manno-octulosonate from 3-deoxy-D-manno-octulosonate and CTP: step 1/1. It participates in bacterial outer membrane biogenesis; lipopolysaccharide biosynthesis. In terms of biological role, activates KDO (a required 8-carbon sugar) for incorporation into bacterial lipopolysaccharide in Gram-negative bacteria. The sequence is that of 3-deoxy-manno-octulosonate cytidylyltransferase from Vibrio vulnificus (strain CMCP6).